We begin with the raw amino-acid sequence, 349 residues long: Biotin synthase (349 aa).

The Radical SAM core domain maps to 70 to 295; it reads PEVEVEGIIS…RTMLRFAGGR (226 aa). 3 residues coordinate [4Fe-4S] cluster: C85, C89, and C92. [2Fe-2S] cluster contacts are provided by C128, C161, C220, and R290.

It belongs to the radical SAM superfamily. Biotin synthase family. In terms of assembly, homodimer. It depends on [4Fe-4S] cluster as a cofactor. Requires [2Fe-2S] cluster as cofactor.

The catalysed reaction is (4R,5S)-dethiobiotin + (sulfur carrier)-SH + 2 reduced [2Fe-2S]-[ferredoxin] + 2 S-adenosyl-L-methionine = (sulfur carrier)-H + biotin + 2 5'-deoxyadenosine + 2 L-methionine + 2 oxidized [2Fe-2S]-[ferredoxin]. It participates in cofactor biosynthesis; biotin biosynthesis; biotin from 7,8-diaminononanoate: step 2/2. In terms of biological role, catalyzes the conversion of dethiobiotin (DTB) to biotin by the insertion of a sulfur atom into dethiobiotin via a radical-based mechanism. The chain is Biotin synthase from Mycobacterium bovis (strain ATCC BAA-935 / AF2122/97).